A 483-amino-acid polypeptide reads, in one-letter code: tRNA-2-methylthio-N(6)-dimethylallyladenosine synthase (483 aa).

The MTTase N-terminal domain maps to 31–148 (KKLYIETQGC…LPQMLDQHHA (118 aa)). Residues Cys-40, Cys-77, Cys-111, Cys-192, Cys-196, and Cys-199 each coordinate [4Fe-4S] cluster. Residues 178-410 (RVEGFKAFVS…QQVIKQSSIE (233 aa)) enclose the Radical SAM core domain. The 65-residue stretch at 413–477 (DAMLGKIERV…LNLVYGELLN (65 aa)) folds into the TRAM domain.

Belongs to the methylthiotransferase family. MiaB subfamily. As to quaternary structure, monomer. Requires [4Fe-4S] cluster as cofactor.

The protein localises to the cytoplasm. The enzyme catalyses N(6)-dimethylallyladenosine(37) in tRNA + (sulfur carrier)-SH + AH2 + 2 S-adenosyl-L-methionine = 2-methylsulfanyl-N(6)-dimethylallyladenosine(37) in tRNA + (sulfur carrier)-H + 5'-deoxyadenosine + L-methionine + A + S-adenosyl-L-homocysteine + 2 H(+). Catalyzes the methylthiolation of N6-(dimethylallyl)adenosine (i(6)A), leading to the formation of 2-methylthio-N6-(dimethylallyl)adenosine (ms(2)i(6)A) at position 37 in tRNAs that read codons beginning with uridine. This is tRNA-2-methylthio-N(6)-dimethylallyladenosine synthase from Acinetobacter baumannii (strain AB0057).